Reading from the N-terminus, the 410-residue chain is UPF0761 membrane protein Csal_1895 (410 aa).

Transmembrane regions (helical) follow at residues 43 to 63, 99 to 119, 139 to 159, 180 to 200, 212 to 232, and 247 to 267; these read LFAV…IPSF, SLTL…MVTV, FLLY…GFLL, VAFL…FIYM, AVAG…AFSL, and FAAV…VLVG.

The protein belongs to the UPF0761 family.

The protein resides in the cell inner membrane. The polypeptide is UPF0761 membrane protein Csal_1895 (Chromohalobacter salexigens (strain ATCC BAA-138 / DSM 3043 / CIP 106854 / NCIMB 13768 / 1H11)).